We begin with the raw amino-acid sequence, 267 residues long: Formamidopyrimidine-DNA glycosylase (267 aa).

Catalysis depends on P2, which acts as the Schiff-base intermediate with DNA. Catalysis depends on E3, which acts as the Proton donor. The Proton donor; for beta-elimination activity role is filled by K53. DNA-binding residues include H82 and R100. An FPG-type zinc finger spans residues 230-264; it reads AVYGREGLPCPACGRPVERRVVAGRGTHFCPTCQG. R254 (proton donor; for delta-elimination activity) is an active-site residue.

It belongs to the FPG family. Monomer. Zn(2+) is required as a cofactor.

It catalyses the reaction Hydrolysis of DNA containing ring-opened 7-methylguanine residues, releasing 2,6-diamino-4-hydroxy-5-(N-methyl)formamidopyrimidine.. The catalysed reaction is 2'-deoxyribonucleotide-(2'-deoxyribose 5'-phosphate)-2'-deoxyribonucleotide-DNA = a 3'-end 2'-deoxyribonucleotide-(2,3-dehydro-2,3-deoxyribose 5'-phosphate)-DNA + a 5'-end 5'-phospho-2'-deoxyribonucleoside-DNA + H(+). Its function is as follows. Involved in base excision repair of DNA damaged by oxidation or by mutagenic agents. Acts as a DNA glycosylase that recognizes and removes damaged bases. Has a preference for oxidized purines, such as 7,8-dihydro-8-oxoguanine (8-oxoG). Has AP (apurinic/apyrimidinic) lyase activity and introduces nicks in the DNA strand. Cleaves the DNA backbone by beta-delta elimination to generate a single-strand break at the site of the removed base with both 3'- and 5'-phosphates. In Thermus thermophilus (strain ATCC BAA-163 / DSM 7039 / HB27), this protein is Formamidopyrimidine-DNA glycosylase.